A 23-amino-acid polypeptide reads, in one-letter code: Caerulein precursor fragment R6 (23 aa).

As to expression, expressed by the skin glands.

It localises to the secreted. Its function is as follows. Antimicrobial peptide. This is Caerulein precursor fragment R6 from Xenopus ruwenzoriensis (Uganda clawed frog).